The chain runs to 137 residues: Small ribosomal subunit protein uS12 (137 aa).

2 disordered regions span residues 1-21 (MPTINQLVRKPRKSKIEKSDS) and 33-57 (KVQTKMAAPQKRGVATRVGTMTPKK).

It belongs to the universal ribosomal protein uS12 family. As to quaternary structure, part of the 30S ribosomal subunit. Contacts proteins S8 and S17. May interact with IF1 in the 30S initiation complex.

Functionally, with S4 and S5 plays an important role in translational accuracy. Interacts with and stabilizes bases of the 16S rRNA that are involved in tRNA selection in the A site and with the mRNA backbone. Located at the interface of the 30S and 50S subunits, it traverses the body of the 30S subunit contacting proteins on the other side and probably holding the rRNA structure together. The combined cluster of proteins S8, S12 and S17 appears to hold together the shoulder and platform of the 30S subunit. The sequence is that of Small ribosomal subunit protein uS12 from Streptococcus pyogenes serotype M1.